Consider the following 99-residue polypeptide: MICOS complex subunit MIC10 (99 aa).

2 helical membrane-spanning segments follow: residues 27–43 and 50–66; these read RFVY…LLFF and WASI…SAYT.

Belongs to the MICOS complex subunit Mic10 family. As to quaternary structure, component of the mitochondrial contact site and cristae organizing system (MICOS) complex. The MICOS complex associates with mitochondrial outer membrane proteins. Present in a large lipid-enriched complex called mitochondrial transmembrane lipoprotein (MTL) complex made of proteins located in the two mitochondrial membranes, including the TOM complex and the core components of the MICOS complex and containing at least digalactosyldiacylglycerol (DGDG).

Its subcellular location is the mitochondrion inner membrane. Its function is as follows. Component of the MICOS complex, a large protein complex of the mitochondrial inner membrane that plays crucial roles in the maintenance of crista junctions, inner membrane architecture, and formation of contact sites to the outer membrane. The protein is MICOS complex subunit MIC10 of Arabidopsis thaliana (Mouse-ear cress).